Here is a 521-residue protein sequence, read N- to C-terminus: AAA ATPase forming ring-shaped complexes (521 aa).

Positions Thr-4 to Gln-44 form a coiled coil. ATP is bound at residue Gly-235 to Met-240.

This sequence belongs to the AAA ATPase family. As to quaternary structure, homohexamer. Assembles into a hexameric ring structure.

The sequence is that of AAA ATPase forming ring-shaped complexes from Bifidobacterium longum (strain DJO10A).